We begin with the raw amino-acid sequence, 99 residues long: Sarcosine oxidase subunit delta (99 aa).

Cys6, Cys9, His59, and Cys63 together coordinate Zn(2+).

It belongs to the SoxD family. As to quaternary structure, heterotetramer composed of subunits alpha (SoxA), beta (SoxB), gamma (SoxG) and delta (SoxD).

It is found in the cytoplasm. The enzyme catalyses sarcosine + (6S)-5,6,7,8-tetrahydrofolate + O2 = (6R)-5,10-methylene-5,6,7,8-tetrahydrofolate + glycine + H2O2. It carries out the reaction sarcosine + O2 + H2O = formaldehyde + glycine + H2O2. With respect to regulation, inhibited by Zn(2+), Cu(2+), Cd(2+), Hg(2+), Ag(+), p-chloromercuribenzoate (p-CMB), iodoacetamide, N-ethylmaleimide, CN(-), o-phenanthroline and sodium lauryl sulfate. In terms of biological role, in the presence of tetrahydrofolate, catalyzes the oxidative demethylation of sarcosine to yield glycine, 5,10-methylenetetrahydrofolate and hydrogen peroxide. In the absence of tetrahydrofolate, catalyzes the oxidative demethylation of sarcosine to yield glycine, formaldehyde and hydrogen peroxide. Can also use N-methyl-L-alanine and N-ethyl-L-glycine. Is very specific for oxygen as an acceptor. The chain is Sarcosine oxidase subunit delta from Corynebacterium sp. (strain U-96).